The sequence spans 264 residues: Rhamnosyltransferase WbbL (264 aa).

It belongs to the glycosyltransferase 2 family.

It participates in bacterial outer membrane biogenesis; lipopolysaccharide biosynthesis. In terms of biological role, rhamnosyltransferase involved in lipopolysaccharide biosynthesis. The protein is Rhamnosyltransferase WbbL (wbbL) of Escherichia coli (strain K12).